A 308-amino-acid chain; its full sequence is Acetylglutamate kinase (308 aa).

Residues 86–87 (GG), Arg108, and Asn201 contribute to the substrate site.

This sequence belongs to the acetylglutamate kinase family. ArgB subfamily.

The protein resides in the cytoplasm. It carries out the reaction N-acetyl-L-glutamate + ATP = N-acetyl-L-glutamyl 5-phosphate + ADP. Its pathway is amino-acid biosynthesis; L-arginine biosynthesis; N(2)-acetyl-L-ornithine from L-glutamate: step 2/4. Catalyzes the ATP-dependent phosphorylation of N-acetyl-L-glutamate. The polypeptide is Acetylglutamate kinase (Prochlorococcus marinus (strain MIT 9313)).